Consider the following 307-residue polypeptide: Sesquiterpene synthase-like protein Agr10 (307 aa).

The disordered stretch occupies residues 287-307 (GRYFGDRGPENQSDIPTSSNR). Residues 296–307 (ENQSDIPTSSNR) are compositionally biased toward polar residues.

The protein belongs to the terpene synthase family.

The polypeptide is Sesquiterpene synthase-like protein Agr10 (Cyclocybe aegerita (Black poplar mushroom)).